A 239-amino-acid chain; its full sequence is Small ribosomal subunit protein eS6A (239 aa).

Ser235 and Ser236 each carry phosphoserine.

It belongs to the eukaryotic ribosomal protein eS6 family. As to quaternary structure, component of the small ribosomal subunit (SSU). Mature yeast ribosomes consist of a small (40S) and a large (60S) subunit. The 40S small subunit contains 1 molecule of ribosomal RNA (18S rRNA) and at least 33 different proteins. The large 60S subunit contains 3 rRNA molecules (25S, 5.8S and 5S rRNA) and at least 46 different proteins. Interacts with snoRNA U3. uS11 interacts with MPP10. Component of the ribosomal small subunit (SSU) processome composed of at least 40 protein subunits and snoRNA U3. In terms of processing, phosphorylated.

It is found in the cytoplasm. Component of the ribosome, a large ribonucleoprotein complex responsible for the synthesis of proteins in the cell. The small ribosomal subunit (SSU) binds messenger RNAs (mRNAs) and translates the encoded message by selecting cognate aminoacyl-transfer RNA (tRNA) molecules. The large subunit (LSU) contains the ribosomal catalytic site termed the peptidyl transferase center (PTC), which catalyzes the formation of peptide bonds, thereby polymerizing the amino acids delivered by tRNAs into a polypeptide chain. The nascent polypeptides leave the ribosome through a tunnel in the LSU and interact with protein factors that function in enzymatic processing, targeting, and the membrane insertion of nascent chains at the exit of the ribosomal tunnel. eS6 is involved in nucleolar processing of pre-18S ribosomal RNA and ribosome assembly. In Schizosaccharomyces pombe (strain 972 / ATCC 24843) (Fission yeast), this protein is Small ribosomal subunit protein eS6A (rps601).